Here is a 541-residue protein sequence, read N- to C-terminus: Transmembrane protein 151 homolog (541 aa).

The next 3 helical transmembrane spans lie at 27–47 (GYGK…YATF), 73–93 (YNFV…MECW), and 254–274 (PWFL…SWPL). Residues 503 to 541 (ASISHSSSKDLKSLTLKSSSSNNNNNNSNNNNNDDPEHP) form a disordered region. Positions 515 to 535 (SLTLKSSSSNNNNNNSNNNNN) are enriched in low complexity.

It belongs to the TMEM151 family.

It localises to the membrane. The chain is Transmembrane protein 151 homolog from Caenorhabditis elegans.